The following is a 435-amino-acid chain: Minor fimbrial subunit HifE (435 aa).

Positions 1-31 are cleaved as a signal peptide; sequence MKTLTTYAKYFTPISKIAFLFCFLMGNIAEA.

The protein belongs to the fimbrial protein family.

The protein localises to the fimbrium. Its function is as follows. May be a minor structural protein required for pilus biogenesis. May be the adhesive component in the pili. This is Minor fimbrial subunit HifE (hifE) from Haemophilus influenzae.